Reading from the N-terminus, the 306-residue chain is Pantothenate kinase (306 aa).

Residue 91–98 (GSVAVGKS) participates in ATP binding.

This sequence belongs to the prokaryotic pantothenate kinase family.

Its subcellular location is the cytoplasm. It catalyses the reaction (R)-pantothenate + ATP = (R)-4'-phosphopantothenate + ADP + H(+). Its pathway is cofactor biosynthesis; coenzyme A biosynthesis; CoA from (R)-pantothenate: step 1/5. The chain is Pantothenate kinase from Streptococcus suis (strain 05ZYH33).